We begin with the raw amino-acid sequence, 321 residues long: Malate dehydrogenase (321 aa).

NAD(+) is bound by residues 10-15 (GGGQIG) and Asp-34. Substrate-binding residues include Arg-83 and Arg-89. NAD(+)-binding positions include Asn-96 and 119–121 (ISN). The substrate site is built by Asn-121 and Arg-152. Catalysis depends on His-176, which acts as the Proton acceptor.

Belongs to the LDH/MDH superfamily. MDH type 3 family.

The enzyme catalyses (S)-malate + NAD(+) = oxaloacetate + NADH + H(+). Functionally, catalyzes the reversible oxidation of malate to oxaloacetate. This Trichlorobacter lovleyi (strain ATCC BAA-1151 / DSM 17278 / SZ) (Geobacter lovleyi) protein is Malate dehydrogenase.